The primary structure comprises 1084 residues: Siderophore biosynthesis regulatory protein URBS1 (1084 aa).

Disordered regions lie at residues 1–164, 245–283, and 300–337; these read MALP…QSSS, AEEH…RDSY, and RPVH…AGMR. Positions 23 to 51 are enriched in low complexity; it reads QAAAASSSSSSSSSHHPPPRIAARPIAPA. Polar residues-rich tracts occupy residues 97–106 and 128–141; these read SHHNASSTAT and RSQS…NRSQ. Positions 150–164 are enriched in low complexity; it reads PSRSQPNSPLLQSSS. Residues 245–260 show a composition bias toward basic and acidic residues; sequence AEEHAKMQRYSDEHPR. A GATA-type 1 zinc finger spans residues 338–362; the sequence is CSNCGVTSTPLWRRAPDGSTICNAC. Disordered regions lie at residues 372-405 and 442-472; these read HRSA…REDD and VSKR…KMDD. Positions 373 to 385 are enriched in polar residues; that stretch reads RSASNRLSGSDAS. Residues 482-506 form a GATA-type 2 zinc finger; sequence CTNCQTTTTPLWRRDEDGNNICNAC. Disordered regions lie at residues 559–595, 643–679, 692–803, 841–940, 953–1019, and 1040–1084; these read IAPA…MREA, RAGA…DERD, THAA…TKLS, EAAG…SRRN, AAVP…DDHW, and ARPV…APRT. 2 stretches are compositionally biased toward basic and acidic residues: residues 650 to 659 and 715 to 725; these read RTSHPDDSRS and RLGRSELHGES. Positions 752-781 are enriched in basic residues; sequence PHHHHHHHHHHANHASHAVHHGHHHHHHHP. The segment covering 875–888 has biased composition (basic and acidic residues); that stretch reads RGTRSGHDSIKQEA. Residues 961–970 show a composition bias toward polar residues; it reads SPPSTVSNPA. Over residues 1070-1084 the composition is skewed to low complexity; sequence PVASSPSQAVSAPRT.

The protein resides in the nucleus. In terms of biological role, involved in the regulation of secreted ferrichrome-type siderophores. Acts directly or indirectly to repress the biosynthesis of siderophores. This chain is Siderophore biosynthesis regulatory protein URBS1 (URBS1), found in Mycosarcoma maydis (Corn smut fungus).